The chain runs to 485 residues: Probable glycine dehydrogenase (decarboxylating) subunit 2 (485 aa).

Lys273 is subject to N6-(pyridoxal phosphate)lysine.

Belongs to the GcvP family. C-terminal subunit subfamily. In terms of assembly, the glycine cleavage system is composed of four proteins: P, T, L and H. In this organism, the P 'protein' is a heterodimer of two subunits. It depends on pyridoxal 5'-phosphate as a cofactor.

It carries out the reaction N(6)-[(R)-lipoyl]-L-lysyl-[glycine-cleavage complex H protein] + glycine + H(+) = N(6)-[(R)-S(8)-aminomethyldihydrolipoyl]-L-lysyl-[glycine-cleavage complex H protein] + CO2. Its function is as follows. The glycine cleavage system catalyzes the degradation of glycine. The P protein binds the alpha-amino group of glycine through its pyridoxal phosphate cofactor; CO(2) is released and the remaining methylamine moiety is then transferred to the lipoamide cofactor of the H protein. The protein is Probable glycine dehydrogenase (decarboxylating) subunit 2 of Oceanobacillus iheyensis (strain DSM 14371 / CIP 107618 / JCM 11309 / KCTC 3954 / HTE831).